We begin with the raw amino-acid sequence, 151 residues long: Glutamate mutase sigma subunit 1 (151 aa).

The 134-residue stretch at Pro-7–Thr-140 folds into the B12-binding domain. Residues Ser-17 to Val-21, His-20, Ser-65 to Leu-67, and Asn-96 to Gly-100 contribute to the adenosylcob(III)alamin site.

Belongs to the methylaspartate mutase GlmS subunit family. As to quaternary structure, heterotetramer composed of 2 epsilon subunits (GlmE) and 2 sigma subunits (GlmS). GlmE exists as a homodimer and GlmS as a monomer. Adenosylcob(III)alamin is required as a cofactor.

The enzyme catalyses (2S,3S)-3-methyl-L-aspartate = L-glutamate. It participates in amino-acid degradation; L-glutamate degradation via mesaconate pathway; acetate and pyruvate from L-glutamate: step 1/4. Its function is as follows. Catalyzes the carbon skeleton rearrangement of L-glutamate to L-threo-3-methylaspartate ((2S,3S)-3-methylaspartate). The protein is Glutamate mutase sigma subunit 1 of Haloarcula marismortui (strain ATCC 43049 / DSM 3752 / JCM 8966 / VKM B-1809) (Halobacterium marismortui).